The chain runs to 270 residues: Putative carbamate hydrolase RutD (270 aa).

The protein belongs to the AB hydrolase superfamily. Hydrolase RutD family.

It catalyses the reaction carbamate + 2 H(+) = NH4(+) + CO2. Functionally, involved in pyrimidine catabolism. May facilitate the hydrolysis of carbamate, a reaction that can also occur spontaneously. The chain is Putative carbamate hydrolase RutD from Escherichia coli (strain SMS-3-5 / SECEC).